A 696-amino-acid chain; its full sequence is C2 domain-containing protein 2 (696 aa).

Residues 8–28 form a helical membrane-spanning segment; it reads VQWLFLVSLFVAALGTVGLYL. One can recognise an SMP-LBD domain in the interval 45–238; it reads EPDELRRRES…PTQVKEAQSL (194 aa). Position 54 is a phosphoserine (Ser-54). The C2 domain occupies 241–357; it reads PSSTAQEPCP…RKQPNGPQTF (117 aa). Ser-436 carries the post-translational modification Phosphoserine. Thr-440 is modified (phosphothreonine). Residues 551 to 611 form a disordered region; the sequence is ATEASATTPP…DGDELSESSL (61 aa). The span at 573–588 shows a compositional bias: basic and acidic residues; the sequence is KPRENDLDSWELEKES. A Phosphoserine modification is found at Ser-581.

The protein resides in the membrane. This Mus musculus (Mouse) protein is C2 domain-containing protein 2.